The primary structure comprises 80 residues: MGMRMMFTVFLLVVLATTVVSIPSDRASDGRNAEVNERAPWLVPSTITTCCGYDPGSMCPPCMCNNTCKPKPKKSGRRNH.

A signal peptide spans Met-1–Ser-21. Residues Ile-22–Arg-38 constitute a propeptide that is removed on maturation. At Pro-40 the chain carries 4-hydroxyproline. An O-linked (HexNAc...) serine glycan is attached at Ser-45. A 4-hydroxyproline mark is found at Pro-55, Pro-60, Pro-61, Pro-70, and Pro-72. A Serine amide modification is found at Ser-75. The propeptide occupies Gly-76–His-80.

Belongs to the conotoxin A superfamily. Post-translationally, contains 3 disulfide bonds. In terms of tissue distribution, expressed by the venom duct.

The protein localises to the secreted. Neurotoxin with probable activity on sodium channel. Induces intense repetitive firing of the frog neuromuscular junction, leading to a tetanic contracture in muscle fiber (spastic paralysis). In vivo, shows the same effect as the whole venom when injected on fish prey. This chain is Conotoxin SmIVB, found in Conus stercusmuscarum (Fly-specked cone).